The sequence spans 477 residues: MSPQTETKASVGFKAGVKEYKLTYYTPEYQTKDTDILAAFRVTPQPGVPPEEAGAAVAAESSTGTWTTVWTDGLTSLDRYKGRCYRIERVVGEKDQYIAYVAYPLDLFEEGSVTNMFTSIVGNVFGFKALRALRLEDLRIPPAYVKTFQGPPHGIQVERDKLNKYGRPLLGCTIKPKLGLSAKNYGRAVYECLRGGLDFTKDDENVNSQPFMRWRDRFLFCAEAIYKAQTETGEIKGHYLNATAGTCEEMIKRAVFARELGVPIVMHDYLTGGFTANTSLAHYCRDNGLLLHIHRAMHAVIDRQKNHGIHFRVLAKALRMSGGDHIHSGTVVGKLEGERDITLGFVDLLRDDFVEQDRSRGIYFTQDWVSLPGVLPVASGGIHVWHMPALTEIFGDDSVLQFGGGTLGHPWGNAPGAVANRLALEACVQARNEGRDLAQEGNEIIREACKWSPELAAACQVWKEIVFNFAAVDVLDK.

Positions 1–2 (MS) are excised as a propeptide. Position 3 is an N-acetylproline (Pro3). Lys14 is subject to N6,N6,N6-trimethyllysine. Substrate contacts are provided by Asn123 and Thr173. Lys175 (proton acceptor) is an active-site residue. A substrate-binding site is contributed by Lys177. Mg(2+)-binding residues include Lys201, Asp203, and Glu204. Lys201 is subject to N6-carboxylysine. The active-site Proton acceptor is the His294. 3 residues coordinate substrate: Arg295, His327, and Ser379.

The protein belongs to the RuBisCO large chain family. Type I subfamily. As to quaternary structure, heterohexadecamer of 8 large chains and 8 small chains; disulfide-linked. The disulfide link is formed within the large subunit homodimers. Requires Mg(2+) as cofactor. In terms of processing, the disulfide bond which can form in the large chain dimeric partners within the hexadecamer appears to be associated with oxidative stress and protein turnover.

The protein localises to the plastid. It localises to the chloroplast. The catalysed reaction is 2 (2R)-3-phosphoglycerate + 2 H(+) = D-ribulose 1,5-bisphosphate + CO2 + H2O. It catalyses the reaction D-ribulose 1,5-bisphosphate + O2 = 2-phosphoglycolate + (2R)-3-phosphoglycerate + 2 H(+). Functionally, ruBisCO catalyzes two reactions: the carboxylation of D-ribulose 1,5-bisphosphate, the primary event in carbon dioxide fixation, as well as the oxidative fragmentation of the pentose substrate in the photorespiration process. Both reactions occur simultaneously and in competition at the same active site. This chain is Ribulose bisphosphate carboxylase large chain, found in Nicotiana acuminata (Acuminate tobacco).